Consider the following 467-residue polypeptide: Phosphomethylpyrimidine synthase (467 aa).

Substrate contacts are provided by residues N80, M109, Y139, H175, 195–197, 236–239, and E275; these read SRG and DSLR. H279 contacts Zn(2+). Y302 serves as a coordination point for substrate. H343 is a Zn(2+) binding site. Residues C423, C426, and C431 each contribute to the [4Fe-4S] cluster site.

The protein belongs to the ThiC family. Requires [4Fe-4S] cluster as cofactor.

It catalyses the reaction 5-amino-1-(5-phospho-beta-D-ribosyl)imidazole + S-adenosyl-L-methionine = 4-amino-2-methyl-5-(phosphooxymethyl)pyrimidine + CO + 5'-deoxyadenosine + formate + L-methionine + 3 H(+). It participates in cofactor biosynthesis; thiamine diphosphate biosynthesis. Its function is as follows. Catalyzes the synthesis of the hydroxymethylpyrimidine phosphate (HMP-P) moiety of thiamine from aminoimidazole ribotide (AIR) in a radical S-adenosyl-L-methionine (SAM)-dependent reaction. The sequence is that of Phosphomethylpyrimidine synthase from Synechococcus sp. (strain WH7803).